The following is a 297-amino-acid chain: Large ribosomal subunit protein uL3 (297 aa).

2 disordered regions span residues Asn124–Gln143 and Met258–Glu297.

This sequence belongs to the universal ribosomal protein uL3 family. Part of the 50S ribosomal subunit. Forms a cluster with proteins L14 and L19.

One of the primary rRNA binding proteins, it binds directly near the 3'-end of the 23S rRNA, where it nucleates assembly of the 50S subunit. The protein is Large ribosomal subunit protein uL3 of Mycoplasma mobile (strain ATCC 43663 / 163K / NCTC 11711) (Mesomycoplasma mobile).